Reading from the N-terminus, the 319-residue chain is L-lactate dehydrogenase 2 (319 aa).

NAD(+) contacts are provided by residues Val-16, Asp-37, Lys-42, Tyr-68, and 82-83; that span reads GA. 2 residues coordinate substrate: Gln-85 and Arg-91. NAD(+) is bound by residues Ser-104, 121 to 123, and Ser-146; that span reads AAN. Residue 123 to 126 coordinates substrate; that stretch reads NPVD. 151–154 is a binding site for substrate; sequence DSAR. His-178 acts as the Proton acceptor in catalysis. Tyr-222 bears the Phosphotyrosine mark. Thr-231 lines the substrate pocket.

Belongs to the LDH/MDH superfamily. LDH family. Homotetramer.

It is found in the cytoplasm. It catalyses the reaction (S)-lactate + NAD(+) = pyruvate + NADH + H(+). The protein operates within fermentation; pyruvate fermentation to lactate; (S)-lactate from pyruvate: step 1/1. Its function is as follows. Catalyzes the conversion of lactate to pyruvate (Potential). Contributes to S.aureus growth during nitrosative stress in both aerobically and anaerobically cultured cells, despite playing a secondary role in this resistance mechanism. The sequence is that of L-lactate dehydrogenase 2 from Staphylococcus aureus (strain Mu3 / ATCC 700698).